Here is a 1488-residue protein sequence, read N- to C-terminus: WD repeat-containing protein 7 (1488 aa).

WD repeat units lie at residues 17–56 (APTHCISSILLTDDGGTIVTGCHDGQICLWDLSEELEVNP), 62–104 (GHTA…CIEF), 156–199 (ISPD…SGLQ), 324–366 (VICP…DKQE), 404–443 (NEPLKVTASVYIPAHGRLVCGREDGSIIIVPATQTAIVQL), 462–507 (GHRN…MKHI), and 558–597 (RHLFPIQVIKWRPSDDYLVVGCTDGSVCVWQMDTGALDRC). Disordered regions lie at residues 761–781 (EEEDEEEVMRQRREESDPEYR) and 911–947 (GDHMKKGPTRPPRPGTPDLSKARDSPPASSNIVQGQI). A compositionally biased stretch (basic and acidic residues) spans 768–781 (VMRQRREESDPEYR). The residue at position 935 (serine 935) is a Phosphoserine. The span at 937–947 (PASSNIVQGQI) shows a compositional bias: polar residues. 2 WD repeats span residues 1349–1388 (PAICRFYMVSYYERSHRIAVGARHGSVALYDIRTGKCQTI) and 1390–1430 (GHKG…LGSI). Serine 1454 is modified (phosphoserine).

The chain is WD repeat-containing protein 7 (Wdr7) from Rattus norvegicus (Rat).